A 287-amino-acid chain; its full sequence is ATP synthase gamma chain (287 aa).

Belongs to the ATPase gamma chain family. In terms of assembly, F-type ATPases have 2 components, CF(1) - the catalytic core - and CF(0) - the membrane proton channel. CF(1) has five subunits: alpha(3), beta(3), gamma(1), delta(1), epsilon(1). CF(0) has three main subunits: a, b and c.

The protein resides in the cell inner membrane. Functionally, produces ATP from ADP in the presence of a proton gradient across the membrane. The gamma chain is believed to be important in regulating ATPase activity and the flow of protons through the CF(0) complex. This chain is ATP synthase gamma chain, found in Photorhabdus laumondii subsp. laumondii (strain DSM 15139 / CIP 105565 / TT01) (Photorhabdus luminescens subsp. laumondii).